Consider the following 54-residue polypeptide: ISINQDLKAITDMLLTEQIQARQRCLAALRQRLLDLDSDVSLFNGDLLPNGRCS.

Residues cysteine 25 and cysteine 53 are joined by a disulfide bond. A Leucine amide modification is found at leucine 36.

The protein belongs to the molluscan ELH family. This protein consists of a large 36-residue subunit, bound by a single disulfide-bond to a small 18-residue subunit.

Its subcellular location is the secreted. Functionally, injected in sexually mature animals califin B excites LB and LC cells of the abdominal ganglion and cause egg-laying. This Aplysia californica (California sea hare) protein is Califin-B.